Here is a 1460-residue protein sequence, read N- to C-terminus: Ankyrin repeat-containing protein kinase A (1460 aa).

7 disordered regions span residues 1 to 32, 57 to 181, 216 to 259, 272 to 311, 329 to 354, 374 to 510, and 551 to 608; these read MSIKLPLSNINSGGNSNNSSSSNSTSNNNINI, IKQQ…HKSH, RENE…ASST, STSNAATNTNTNANTTSTTKTTSTVRSTSPTQFKPRVEFD, SSPSDFRLNPPSNVHMPTSSLSTSTS, FTPS…SSNP, and CPSA…SSIP. 3 stretches are compositionally biased toward low complexity: residues 8-32, 61-86, and 111-128; these read SNINSGGNSNNSSSSNSTSNNNINI, SNNNTSTSVCVSSIHSSSPISSPTSH, and SSGSNSSSSSSGSNNNNN. Polar residues predominate over residues 129–140; sequence QIKTSNGMNKPN. Positions 149–162 are enriched in basic and acidic residues; that stretch reads KPRENSQNKIDDNK. Composition is skewed to low complexity over residues 220–259 and 272–300; these read NNNNSSNNNSNNNNNNNNNNNNSNNINNVNGNKSSLASST and STSNAATNTNTNANTTSTTKTTSTVRSTS. Composition is skewed to polar residues over residues 329–345 and 384–404; these read SSPSDFRLNPPSNVHMP and PTNSSQVDTLQMSTESITIQP. Low complexity predominate over residues 405–422; that stretch reads SSLDSSSESVSDGLQSVS. Positions 423-434 are enriched in polar residues; the sequence is GSPVTASPSPTI. Over residues 435 to 461 the composition is skewed to low complexity; sequence SNNTNATTTNNNNNTNTNNNNNNNNNQ. Residues 462 to 472 show a composition bias toward basic residues; the sequence is HNHHHHQHSHS. The segment at 467-667 is interaction with 14-3-3 protein; sequence HQHSHSQQHD…IFRGCGIPLD (201 aa). The segment covering 486-497 has biased composition (low complexity); sequence PSSPTSPTLLPS. The Phorbol-ester/DAG-type zinc-finger motif lies at 499–551; sequence THDFSSEYSSNPGGKCAICRKPLWSFPISDKSRRCRDCSLVVHRACVPLATEC. The span at 559–568 shows a compositional bias: polar residues; sequence SKLSVPNGNQ. The segment covering 569–608 has biased composition (low complexity); the sequence is SNSSSSSSSSSSSSSSSNSSSSNTKGHSRTPSSPSVSSIP. The 72-residue stretch at 653–724 folds into the GRAM domain; sequence RDFHFIFRGC…SNIASIEKRS (72 aa). ANK repeat units follow at residues 814–843, 852–883, 887–920, 924–955, and 959–988; these read SKEILLMSAIKNNNLDMVVTLLNYYCQVNS, KGYTPLHNAVFSECSDQIFMHLLNQKEVRVRE, DGNTPLHYFCQKFKSPECQRIVQAMIEKGANINE, NGETPLHKAIFNHSVRLLMVYILLKNNANVNI, and AGESPLHYAVRLGRLDVAKMLLAAGADPTI. The region spanning 1112 to 1375 is the Protein kinase domain; it reads LEYTEKIGSG…ATEAMTALAV (264 aa). Residues 1118–1126 and K1139 each bind ATP; that span reads IGSGASGKV. D1231 (proton acceptor) is an active-site residue. A helical transmembrane segment spans residues 1293–1313; that stretch reads MGIVMWEIVYCVVYGCYMIPY. Residues 1425–1460 are a coiled coil; the sequence is PEEEQIYQEAMEKQRRNQEASANRNQKNKELLNNNN. Residues 1434–1460 are disordered; the sequence is AMEKQRRNQEASANRNQKNKELLNNNN.

This sequence belongs to the protein kinase superfamily. TKL Ser/Thr protein kinase family.

It localises to the cytoplasm. The protein localises to the cytoskeleton. It is found in the membrane. The protein resides in the nucleus. The catalysed reaction is L-seryl-[protein] + ATP = O-phospho-L-seryl-[protein] + ADP + H(+). The enzyme catalyses L-threonyl-[protein] + ATP = O-phospho-L-threonyl-[protein] + ADP + H(+). Functionally, involved in the development of the fruiting body. Overexpression phenocopies the spnA null phenotype. This is Ankyrin repeat-containing protein kinase A (arkA) from Dictyostelium discoideum (Social amoeba).